A 492-amino-acid chain; its full sequence is Glycosyltransferase alg8 (492 aa).

Transmembrane regions (helical) follow at residues glycine 13–valine 32, isoleucine 47–valine 69, leucine 379–valine 401, and proline 421–phenylalanine 443.

Belongs to the glycosyltransferase 2 family.

It localises to the cell membrane. It participates in glycan biosynthesis; alginate biosynthesis. In terms of biological role, possibly a processive enzyme that polymerizes GDP-mannuronic acid. The protein is Glycosyltransferase alg8 (alg8) of Azotobacter vinelandii.